A 319-amino-acid polypeptide reads, in one-letter code: Probable NAD(P)H-dependent D-xylose reductase xyl1 (319 aa).

Tyr50 (proton donor) is an active-site residue. His112 serves as a coordination point for substrate. NAD(+) contacts are provided by residues 166 to 167 (SN), 215 to 224 (SSFGPLSFLE), and 271 to 281 (KSNNPARLLQN).

Belongs to the aldo/keto reductase family.

The enzyme catalyses xylitol + NAD(+) = D-xylose + NADH + H(+). It catalyses the reaction xylitol + NADP(+) = D-xylose + NADPH + H(+). Its pathway is carbohydrate metabolism; D-xylose degradation. Catalyzes the initial reaction in the xylose utilization pathway by reducing D-xylose into xylitol. Xylose is a major component of hemicelluloses such as xylan. Most fungi utilize D-xylose via three enzymatic reactions, xylose reductase (XR), xylitol dehydrogenase (XDH), and xylulokinase, to form xylulose 5-phosphate, which enters pentose phosphate pathway. The sequence is that of Probable NAD(P)H-dependent D-xylose reductase xyl1 (xyl1) from Emericella nidulans (strain FGSC A4 / ATCC 38163 / CBS 112.46 / NRRL 194 / M139) (Aspergillus nidulans).